An 89-amino-acid polypeptide reads, in one-letter code: UPF0237 protein CA_C0478 (89 aa).

An ACT domain is found at 4-78 (IITVIGKDKV…KKLGVSIKIQ (75 aa)).

It belongs to the UPF0237 family.

The polypeptide is UPF0237 protein CA_C0478 (Clostridium acetobutylicum (strain ATCC 824 / DSM 792 / JCM 1419 / IAM 19013 / LMG 5710 / NBRC 13948 / NRRL B-527 / VKM B-1787 / 2291 / W)).